Reading from the N-terminus, the 198-residue chain is DnaJ homolog subfamily C member 12 (198 aa).

The residue at position 1 (M1) is an N-acetylmethionine. One can recognise a J domain in the interval 14-79 (DYYTLLGCDE…ESRARYDHWR (66 aa)). Residues 114–156 (EESDKTHTTKMENEECNEQRERKKEELASTAEKTEQKEPKPLE) are compositionally biased toward basic and acidic residues. The tract at residues 114–169 (EESDKTHTTKMENEECNEQRERKKEELASTAEKTEQKEPKPLEKSVSPQNSDSSGF) is disordered. Phosphoserine occurs at positions 160, 166, and 182.

Interacts with HSPA8. Interacts with TPH1. Interacts with TPH2. As to expression, expressed at high levels in brain, heart, and testis, and at reduced levels in kidney and stomach.

The protein localises to the cytoplasm. Its function is as follows. Probable co-chaperone that participates in the proper folding of biopterin-dependent aromatic amino acid hydroxylases, which include phenylalanine-4-hydroxylase (PAH), tyrosine 3-monooxygenase (TH) and peripheral and neuronal tryptophan hydroxylases (TPH1 and TPH2). The polypeptide is DnaJ homolog subfamily C member 12 (DNAJC12) (Homo sapiens (Human)).